Here is a 67-residue protein sequence, read N- to C-terminus: Medusin-PT (67 aa).

The N-terminal stretch at 1-22 (MAFLKKSLFLVFFLGFVSLSIC) is a signal peptide. A propeptide spanning residues 23 to 48 (EEEKRETDEKENEQEDDREERSEEKR) is cleaved from the precursor. The segment at 25-46 (EKRETDEKENEQEDDREERSEE) is disordered. Over residues 31–40 (EKENEQEDDR) the composition is skewed to acidic residues. Leu-66 is modified (leucine amide).

This sequence belongs to the frog skin active peptide (FSAP) family. Medusin subfamily. In the synthetic mutant medusin-PT1a [T58K], the Leu-50 has been modified in a D-amino acid. In medusin-PT1a, there is an increase in antimicrobial activity, and an increase in hemolytic activity. It is more potent against S.aureus and gains activity against MRSA, E.faecalis, E.coli, P.aeruginosa and C.albicans. There is an important increase in both biofilm inhibition and biofilm eradication. In terms of tissue distribution, expressed by the skin glands.

It is found in the secreted. Its subcellular location is the target cell membrane. Antimicrobial peptide with activity against Gram-positive bacteria S.epidermidis ATCC 12228 (MIC=50 uM) and S.aureus (MIC=64 ug/ml and MBC=128 ug/ml). Not active against some Gram-positive bacteria (methicillin-resistant S.aureus (MRSA), E.faecalis), Gram-negative bacterium E.coli ATCC 25922 and fungus C.albicans at concentrations up to 100 uM. Can only slightly inhibit the formation of biofilm by S.aureus (minimal biofilm inhibitionconcentration MBIC=512 ug/ml, minimal biofilm eradication concentration MBEC&gt;512 ug/ml). Has an anti-inflammatory effect, since it inhibits the production of the pro-inflammatory cytokines TNF-alpha and IL-1beta. Has high activity of stimulation of insulin release, which may protect the species from being eaten by predators by causing fatal hypoglycemia. Is not cytotoxic to cancer line cells. Shows very low hemolysis on horse erythrocytes and moderate hemolysis on mouse erythrocytes. This is Medusin-PT from Phyllomedusa tarsius (Brownbelly leaf frog).